A 60-amino-acid chain; its full sequence is ATP synthase subunit J, mitochondrial (60 aa).

Residues 13 to 32 (ILKPMLPFFLGGAIVFYGTV) form a helical membrane-spanning segment.

The protein belongs to the ATPase j subunit family. As to quaternary structure, F-type ATPases have 2 components, CF(1) - the catalytic core - and CF(0) - the membrane proton channel. In yeast, the dimeric form of ATP synthase consists of 17 polypeptides: alpha, beta, gamma, delta, epsilon, 4 (B), 5 (OSCP), 6 (A), 8, 9 (C), d, E (Tim11), f, g, h, i/j and k.

The protein localises to the mitochondrion membrane. In terms of biological role, mitochondrial membrane ATP synthase (F(1)F(0) ATP synthase or Complex V) produces ATP from ADP in the presence of a proton gradient across the membrane which is generated by electron transport complexes of the respiratory chain. F-type ATPases consist of two structural domains, F(1) - containing the extramembraneous catalytic core and F(0) - containing the membrane proton channel, linked together by a central stalk and a peripheral stalk. During catalysis, ATP synthesis in the catalytic domain of F(1) is coupled via a rotary mechanism of the central stalk subunits to proton translocation. Part of the complex F(0) domain. Minor subunit located with subunit a in the membrane. The protein is ATP synthase subunit J, mitochondrial (atp18) of Schizosaccharomyces pombe (strain 972 / ATCC 24843) (Fission yeast).